The chain runs to 246 residues: Salivary antigen SP32 (246 aa).

The signal sequence occupies residues 1–23 (MSGHILTVGLIVVVAHCATLSSS). Positions 51–160 (DKFYPDISDD…PDLSKYKNSP (110 aa)) are disordered. The span at 65 to 78 (VVRDNGRKGGDRGR) shows a compositional bias: basic and acidic residues. The span at 79–124 (QSTPSGKESHPSATQTGGRRPSQSPCGESRPSGSATSGRRPSQSPR) shows a compositional bias: polar residues. Basic and acidic residues predominate over residues 141-155 (QQDRRQNKKQPDLSK).

In terms of assembly, interacts with human DSG1. Interacts with human DSG3. In terms of tissue distribution, salivary gland (at protein level).

The protein localises to the secreted. Its function is as follows. Down-regulates the expression of CD86 and HLA-DR on the surface of lipopolysaccharide (LPS)-stimulated human peripheral blood mononuclear cells (PBMCs). Reduces LPS-induced secretion of IL-1beta/IL1B in human PBMCs. Reduces LPS-induced secretion of various cytokines, such as IL-1beta, TNF-alpha/TNF, MCP-1/CCL2, IL6, IL27 and IL-1alpha/IL1A, in host cultured macrophages probably via inhibition of NF-kappa-B signaling pathway. Reduces production of IFN-gamma/IFNG, IL4 and IL6 in human lymphocytes activated with PMA/ionomycin. Exhibits anti-inflammatory activity in carrageenan-induced paw edema model in rats. The sequence is that of Salivary antigen SP32 from Phlebotomus papatasi (Sandfly).